Reading from the N-terminus, the 89-residue chain is Protein YihD (89 aa).

The protein to H.influenzae HI_0845.

This is Protein YihD (yihD) from Escherichia coli O157:H7.